Reading from the N-terminus, the 45-residue chain is DNA-directed RNA polymerase subunit Rpo12 (45 aa).

Zn(2+) is bound by residues Cys8, Cys23, and Cys26.

It belongs to the archaeal Rpo12/eukaryotic RPC10 RNA polymerase subunit family. Part of the RNA polymerase complex. The cofactor is Zn(2+).

The protein localises to the cytoplasm. It carries out the reaction RNA(n) + a ribonucleoside 5'-triphosphate = RNA(n+1) + diphosphate. Functionally, DNA-dependent RNA polymerase (RNAP) catalyzes the transcription of DNA into RNA using the four ribonucleoside triphosphates as substrates. This Methanocella arvoryzae (strain DSM 22066 / NBRC 105507 / MRE50) protein is DNA-directed RNA polymerase subunit Rpo12.